The sequence spans 491 residues: Ketol-acid reductoisomerase (NADP(+)) (491 aa).

The KARI N-terminal Rossmann domain occupies 14–208; it reads LKHLGKCRFM…GSHRAGVLES (195 aa). NADP(+)-binding positions include 45–48, Arg-68, and Ser-78; that span reads CGSQ. The active site involves His-132. Gly-158 contributes to the NADP(+) binding site. KARI C-terminal knotted domains are found at residues 209–344 and 345–485; these read SFVA…QAPN and YQQE…MQNM. Mg(2+) is bound by residues Asp-217, Glu-221, Glu-389, and Glu-393. Ser-414 is a substrate binding site.

The protein belongs to the ketol-acid reductoisomerase family. Mg(2+) is required as a cofactor.

The catalysed reaction is (2R)-2,3-dihydroxy-3-methylbutanoate + NADP(+) = (2S)-2-acetolactate + NADPH + H(+). It carries out the reaction (2R,3R)-2,3-dihydroxy-3-methylpentanoate + NADP(+) = (S)-2-ethyl-2-hydroxy-3-oxobutanoate + NADPH + H(+). Its pathway is amino-acid biosynthesis; L-isoleucine biosynthesis; L-isoleucine from 2-oxobutanoate: step 2/4. It participates in amino-acid biosynthesis; L-valine biosynthesis; L-valine from pyruvate: step 2/4. Its function is as follows. Involved in the biosynthesis of branched-chain amino acids (BCAA). Catalyzes an alkyl-migration followed by a ketol-acid reduction of (S)-2-acetolactate (S2AL) to yield (R)-2,3-dihydroxy-isovalerate. In the isomerase reaction, S2AL is rearranged via a Mg-dependent methyl migration to produce 3-hydroxy-3-methyl-2-ketobutyrate (HMKB). In the reductase reaction, this 2-ketoacid undergoes a metal-dependent reduction by NADPH to yield (R)-2,3-dihydroxy-isovalerate. In Blochmanniella pennsylvanica (strain BPEN), this protein is Ketol-acid reductoisomerase (NADP(+)).